Reading from the N-terminus, the 130-residue chain is Histone H2A type 4 (130 aa).

At S2 the chain carries Phosphoserine; by RPS6KA5. R4 is modified (citrulline; alternate). R4 is modified (symmetric dimethylarginine; by PRMT5; alternate). N6-(2-hydroxyisobutyryl)lysine; alternate is present on residues K6 and K10. 2 positions are modified to N6-acetyllysine; alternate: K6 and K10. The residue at position 10 (K10) is an N6-lactoyllysine; alternate. 3 positions are modified to N6-(2-hydroxyisobutyryl)lysine: K75, K76, and K96. K96 carries the post-translational modification N6-glutaryllysine; alternate. Position 105 is an N5-methylglutamine (Q105). K119 carries the N6-(2-hydroxyisobutyryl)lysine; alternate modification. K119 and K120 each carry N6-glutaryllysine; alternate. K119 carries the N6-crotonyllysine; alternate modification. Position 120 is an N6-crotonyllysine (K120). T121 is modified (phosphothreonine; by DCAF1). N6-glutaryllysine; alternate is present on K126. K126 carries the N6-crotonyllysine; alternate modification. Positions 127-128 match the [ST]-Q motif motif; sequence SQ.

This sequence belongs to the histone H2A family. As to quaternary structure, the nucleosome is a histone octamer containing two molecules each of H2A, H2B, H3 and H4 assembled in one H3-H4 heterotetramer and two H2A-H2B heterodimers. The octamer wraps approximately 147 bp of DNA. Post-translationally, deiminated on Arg-4 in granulocytes upon calcium entry. Monoubiquitination of Lys-120 (H2AK119Ub) by RING1, TRIM37 and RNF2/RING2 complex gives a specific tag for epigenetic transcriptional repression and participates in X chromosome inactivation of female mammals. It is involved in the initiation of both imprinted and random X inactivation. Ubiquitinated H2A is enriched in inactive X chromosome chromatin. Ubiquitination of H2A functions downstream of methylation of 'Lys-27' of histone H3 (H3K27me). H2AK119Ub by RNF2/RING2 can also be induced by ultraviolet and may be involved in DNA repair. Following DNA double-strand breaks (DSBs), it is ubiquitinated through 'Lys-63' linkage of ubiquitin moieties by the E2 ligase UBE2N and the E3 ligases RNF8 and RNF168, leading to the recruitment of repair proteins to sites of DNA damage. Ubiquitination at Lys-14 and Lys-16 (H2AK13Ub and H2AK15Ub, respectively) in response to DNA damage is initiated by RNF168 that mediates monoubiquitination at these 2 sites, and 'Lys-63'-linked ubiquitin are then conjugated to monoubiquitin; RNF8 is able to extend 'Lys-63'-linked ubiquitin chains in vitro. H2AK119Ub and ionizing radiation-induced 'Lys-63'-linked ubiquitination (H2AK13Ub and H2AK15Ub) are distinct events. In terms of processing, phosphorylation on Ser-2 (H2AS1ph) is enhanced during mitosis. Phosphorylation on Ser-2 by RPS6KA5/MSK1 directly represses transcription. Acetylation of H3 inhibits Ser-2 phosphorylation by RPS6KA5/MSK1. Phosphorylation at Thr-121 (H2AT120ph) by DCAF1 is present in the regulatory region of many tumor suppresor genes and down-regulates their transcription. Post-translationally, symmetric dimethylation on Arg-4 by the PRDM1/PRMT5 complex may play a crucial role in the germ-cell lineage. Glutamine methylation at Gln-105 (H2AQ104me) by FBL is specifically dedicated to polymerase I. It is present at 35S ribosomal DNA locus and impairs binding of the FACT complex. In terms of processing, crotonylation (Kcr) is specifically present in male germ cells and marks testis-specific genes in post-meiotic cells, including X-linked genes that escape sex chromosome inactivation in haploid cells. Crotonylation marks active promoters and enhancers and confers resistance to transcriptional repressors. It is also associated with post-meiotically activated genes on autosomes. Post-translationally, lactylated in macrophages by EP300/P300 by using lactoyl-CoA directly derived from endogenous or exogenous lactate, leading to stimulates gene transcription. In terms of tissue distribution, testis.

The protein resides in the nucleus. Its subcellular location is the chromosome. In terms of biological role, core component of nucleosome. Nucleosomes wrap and compact DNA into chromatin, limiting DNA accessibility to the cellular machineries which require DNA as a template. Histones thereby play a central role in transcription regulation, DNA repair, DNA replication and chromosomal stability. DNA accessibility is regulated via a complex set of post-translational modifications of histones, also called histone code, and nucleosome remodeling. The protein is Histone H2A type 4 of Rattus norvegicus (Rat).